A 372-amino-acid chain; its full sequence is Chloromuconate cycloisomerase (372 aa).

The active-site Proton acceptor is the Lys158. Mn(2+) is bound by residues Asp187, Glu213, and Asp238. Glu316 (proton donor) is an active-site residue.

This sequence belongs to the mandelate racemase/muconate lactonizing enzyme family. Requires Mn(2+) as cofactor.

It carries out the reaction 2-[(2R)-2-chloro-2,5-dihydro-5-oxofuryl]acetate = 3-chloro-cis,cis-muconate + H(+). It participates in aromatic compound metabolism; 3-chlorocatechol degradation. This is Chloromuconate cycloisomerase (tfdDII) from Cupriavidus pinatubonensis (strain JMP 134 / LMG 1197) (Cupriavidus necator (strain JMP 134)).